Reading from the N-terminus, the 276-residue chain is Transport and Golgi organization protein 2 homolog (276 aa).

It belongs to the Tango2 family.

It is found in the cytoplasm. It localises to the mitochondrion. The protein resides in the golgi apparatus. May be involved in lipid homeostasis. This Homo sapiens (Human) protein is Transport and Golgi organization protein 2 homolog (TANGO2).